The primary structure comprises 143 residues: Transcriptional regulator MraZ (143 aa).

SpoVT-AbrB domains are found at residues 5-47 (EYRH…PQVE) and 76-119 (ATEC…SKEL).

The protein belongs to the MraZ family. In terms of assembly, forms oligomers.

Its subcellular location is the cytoplasm. It is found in the nucleoid. This chain is Transcriptional regulator MraZ, found in Halalkalibacterium halodurans (strain ATCC BAA-125 / DSM 18197 / FERM 7344 / JCM 9153 / C-125) (Bacillus halodurans).